The chain runs to 1322 residues: Sal-like protein 1 (1322 aa).

The interval 1-41 (MSRRKQAKPQHFQSDPEVASLPRRDGDTEKGQPSRPTKSKD) is disordered. Residues 22-41 (PRRDGDTEKGQPSRPTKSKD) are compositionally biased toward basic and acidic residues. A C2H2-type 1; atypical zinc finger spans residues 43 to 65 (HVCGRCCAEFFELSDLLLHKKSC). Residues 78 to 128 (PASPAKTFPPGPSLNDPDDQMKDAANKADQEDCSDLSEPKGLDREESMEVE) are disordered. Composition is skewed to basic and acidic residues over residues 96 to 107 (DQMKDAANKADQ) and 114 to 124 (SEPKGLDREES). A Glycyl lysine isopeptide (Lys-Gly) (interchain with G-Cter in SUMO2) cross-link involves residue Lys440. 2 C2H2-type zinc fingers span residues 450 to 472 (HKCR…LRSH) and 478 to 500 (FKCN…FQRH). A disordered region spans residues 578–659 (PIPISHSAAS…GGPGGTTFTN (82 aa)). A compositionally biased stretch (polar residues) spans 584-594 (SAASPQGSVKS). A phosphoserine mark is found at Ser591, Ser594, and Ser596. The span at 629–645 (NMASSAVPTAGNSTLNS) shows a compositional bias: polar residues. Residues Lys672, Lys689, and Lys700 each participate in a glycyl lysine isopeptide (Lys-Gly) (interchain with G-Cter in SUMO2) cross-link. 3 consecutive C2H2-type zinc fingers follow at residues 705-727 (NECI…YRTH), 733-755 (FKCK…YSVH), and 765-787 (HSCP…IRMH). Disordered stretches follow at residues 789–855 (GGQI…SSPL) and 891–961 (SMEG…GLSP). Over residues 819-832 (DLDNFSDENMEECP) the composition is skewed to acidic residues. Positions 842 to 855 (SADASQDSLSSSPL) are enriched in low complexity. Positions 898 to 935 (TNDSSSVGGDMESQSAGSPAISESTSSMQALSPSNSTQ) are enriched in polar residues. Over residues 936 to 948 (EFHKSPGMEEKPQ) the composition is skewed to basic and acidic residues. A Phosphoserine modification is found at Ser940. Residues Lys946 and Lys981 each participate in a glycyl lysine isopeptide (Lys-Gly) (interchain with G-Cter in SUMO2) cross-link. 2 C2H2-type zinc fingers span residues 1000-1022 (TACD…YRSH) and 1028-1050 (FICT…MLTH). Lys1085 is covalently cross-linked (Glycyl lysine isopeptide (Lys-Gly) (interchain with G-Cter in SUMO2)). The disordered stretch occupies residues 1094–1119 (VSPQDSKDAPTSHVPQGPLSSSATSP). 2 consecutive C2H2-type zinc fingers follow at residues 1133–1155 (HYCN…ERTH) and 1161–1183 (FACT…MGTH). Residues Lys1218, Lys1297, and Lys1317 each participate in a glycyl lysine isopeptide (Lys-Gly) (interchain with G-Cter in SUMO2) cross-link.

This sequence belongs to the sal C2H2-type zinc-finger protein family. May associate with NuRD histone deacetylase complex (HDAC). Interacts with components of HDAC complex including HDAC1, HDAC2, RBBP4, RBPP7, MTA1 and MTA2. Interacts with CCNQ. Interacts with NSD2 (via PHD-type zinc fingers 1, 2 and 3). In terms of tissue distribution, expressed in the metanephric mesenchyme surrounding ureteric bud.

The protein resides in the nucleus. Transcriptional repressor involved in organogenesis. Plays an essential role in ureteric bud invasion during kidney development. This Mus musculus (Mouse) protein is Sal-like protein 1 (Sall1).